We begin with the raw amino-acid sequence, 209 residues long: MSLPVTLSALDLGALLCSRICHDIISPVGAINNGLELLEEGGADEDAMALIKSSARNASARLQFARIAFGAAGSAGVQIDTGDAQNVATEYFRNEKPEFTWEGARVLLPKNKVKLLLNMLLIGNGAIPRGGSLAVRLEGSDTDPRFVITVKGRMLRVPPKFLELHSGAAPEEPIDAHSVQPYYTLLLAEEAGMKISIHATAEDIVFSAE.

His-22 carries the phosphohistidine modification.

The protein belongs to the ChpT phosphotransferase family. As to quaternary structure, homodimer. Forms an asymmetric heterotetramer with CtrA (2:2). There are at least two modes of interaction between ChpT and CtrA, only one of which is competent to catalyze His-Asp phosphoryl transfer. In terms of processing, is phosphorylated by CckA-P on His-22.

Its subcellular location is the cytoplasm. Component of a regulatory phosphorelay system that controls B.abortus cell growth, division, and intracellular survival inside mammalian host cells. This signaling pathway is composed of CckA, ChpT, CtrA and CpdR. ChpT efficiently and specifically shuttles phosphoryl groups from the CckA kinase to the receiver domains of both CtrA and CpdR. Does not bind ATP. Overexpression of chpT results in a defect in cell morphology, DNA content, and intracellular survival in human macrophages. This chain is Protein phosphotransferase ChpT, found in Brucella abortus (strain 2308).